The chain runs to 557 residues: Dihydroxy-acid dehydratase (557 aa).

C50 is a [2Fe-2S] cluster binding site. D82 contacts Mg(2+). [2Fe-2S] cluster is bound at residue C123. Positions 124 and 125 each coordinate Mg(2+). Position 125 is an N6-carboxylysine (K125). Residue C195 coordinates [2Fe-2S] cluster. Mg(2+) is bound at residue E447. The active-site Proton acceptor is S473.

Belongs to the IlvD/Edd family. Homodimer. The cofactor is [2Fe-2S] cluster. It depends on Mg(2+) as a cofactor.

It carries out the reaction (2R)-2,3-dihydroxy-3-methylbutanoate = 3-methyl-2-oxobutanoate + H2O. It catalyses the reaction (2R,3R)-2,3-dihydroxy-3-methylpentanoate = (S)-3-methyl-2-oxopentanoate + H2O. The protein operates within amino-acid biosynthesis; L-isoleucine biosynthesis; L-isoleucine from 2-oxobutanoate: step 3/4. It participates in amino-acid biosynthesis; L-valine biosynthesis; L-valine from pyruvate: step 3/4. Functionally, functions in the biosynthesis of branched-chain amino acids. Catalyzes the dehydration of (2R,3R)-2,3-dihydroxy-3-methylpentanoate (2,3-dihydroxy-3-methylvalerate) into 2-oxo-3-methylpentanoate (2-oxo-3-methylvalerate) and of (2R)-2,3-dihydroxy-3-methylbutanoate (2,3-dihydroxyisovalerate) into 2-oxo-3-methylbutanoate (2-oxoisovalerate), the penultimate precursor to L-isoleucine and L-valine, respectively. The protein is Dihydroxy-acid dehydratase of Burkholderia thailandensis (strain ATCC 700388 / DSM 13276 / CCUG 48851 / CIP 106301 / E264).